The primary structure comprises 40 residues: Dihydrolipoyl dehydrogenase (40 aa).

FAD is bound at residue 36–40; it reads EKRGT.

Belongs to the class-I pyridine nucleotide-disulfide oxidoreductase family. In terms of assembly, homodimer. It depends on FAD as a cofactor.

It localises to the mitochondrion matrix. The enzyme catalyses N(6)-[(R)-dihydrolipoyl]-L-lysyl-[protein] + NAD(+) = N(6)-[(R)-lipoyl]-L-lysyl-[protein] + NADH + H(+). In terms of biological role, lipoamide dehydrogenase is a component of the glycine cleavage system as well as of the alpha-ketoacid dehydrogenase complexes. The pyruvate dehydrogenase complex contains multiple copies of three enzymatic components: pyruvate dehydrogenase (E1), dihydrolipoamide acetyltransferase (E2) and lipoamide dehydrogenase (E3). The sequence is that of Dihydrolipoyl dehydrogenase from Solanum tuberosum (Potato).